We begin with the raw amino-acid sequence, 599 residues long: Tryptophan 2-C-methyltransferase (599 aa).

Residues 4–149 (KGTVALINPN…RALAEGRSAD (146 aa)) form the B12-binding domain. Residues 167 to 197 (RVAPPALDPRAAPAPSSSPSPSPAPSSSSAP) are disordered. Positions 168–181 (VAPPALDPRAAPAP) are enriched in low complexity. The Radical SAM core domain maps to 239–492 (YREGGLGSIL…IEYERQFMFD (254 aa)). Residues Cys253, Cys257, and Cys260 each coordinate [4Fe-4S] cluster.

[4Fe-4S] cluster serves as cofactor. It depends on cob(II)alamin as a cofactor.

The enzyme catalyses L-tryptophan + S-adenosyl-L-methionine = 2-methyl-L-tryptophan + S-adenosyl-L-homocysteine + H(+). Involved in the biosynthetic pathway of the antibiotic thiostrepton A. First, TsrM catalyzes the transfer of a methyl group from S-adenosyl methionine (SAM) to cobalamin, leading to the formation of methylcobalamin (CH3-cobalamin) and S-adenosyl-L-homocysteine (SAH). Then the methyl group is transferred to the C2 position of tryptophan (Trp) with the concerted action of the radical SAM [4Fe-4S] center, leading to the production of methyltryptophan. This chain is Tryptophan 2-C-methyltransferase, found in Streptomyces laurentii.